The sequence spans 378 residues: Tetraacyldisaccharide 4'-kinase (378 aa).

Alanine 63–threonine 70 provides a ligand contact to ATP.

It belongs to the LpxK family.

The catalysed reaction is a lipid A disaccharide + ATP = a lipid IVA + ADP + H(+). It participates in glycolipid biosynthesis; lipid IV(A) biosynthesis; lipid IV(A) from (3R)-3-hydroxytetradecanoyl-[acyl-carrier-protein] and UDP-N-acetyl-alpha-D-glucosamine: step 6/6. Transfers the gamma-phosphate of ATP to the 4'-position of a tetraacyldisaccharide 1-phosphate intermediate (termed DS-1-P) to form tetraacyldisaccharide 1,4'-bis-phosphate (lipid IVA). This Anaeromyxobacter dehalogenans (strain 2CP-C) protein is Tetraacyldisaccharide 4'-kinase.